The sequence spans 222 residues: MNVAILLAAGKGERLGEKVPKQFLEVEGRMLFEYPLKALLDSNVIDAVVIVVSRDWMDRVVEKVKHEKILGIVEGGKTRSQSVRNALKFLENIKPSYVLVHDAARPFLRKKHIEEVLKKAQETGAATLALKNSDTLIRLDDSRIEYVPREGIYRVQTPQAFSYDLLKRAHSEEKEWADDTEPVHRLGVKISVVEGDLFCFKVTFKSDLELARLIAKEWERIA.

Belongs to the IspD/TarI cytidylyltransferase family. IspD subfamily.

It carries out the reaction 2-C-methyl-D-erythritol 4-phosphate + CTP + H(+) = 4-CDP-2-C-methyl-D-erythritol + diphosphate. The protein operates within isoprenoid biosynthesis; isopentenyl diphosphate biosynthesis via DXP pathway; isopentenyl diphosphate from 1-deoxy-D-xylulose 5-phosphate: step 2/6. Its function is as follows. Catalyzes the formation of 4-diphosphocytidyl-2-C-methyl-D-erythritol from CTP and 2-C-methyl-D-erythritol 4-phosphate (MEP). In Thermotoga neapolitana (strain ATCC 49049 / DSM 4359 / NBRC 107923 / NS-E), this protein is 2-C-methyl-D-erythritol 4-phosphate cytidylyltransferase.